Consider the following 297-residue polypeptide: Alarmin release inhibitor (297 aa).

N-linked (GlcNAc...) asparagine glycans are attached at residues N107, N175, and N190. The Sushi domain occupies 151–211 (TYDPTPNTPT…WVPTLGVCPK (61 aa)). A disulfide bridge links C183 with C209.

Interacts with mouse IL33 (in reduced form).

It is found in the secreted. It localises to the host nucleus. Secreted protein which suppresses the host allergic response by inhibiting the interaction of host IL33 with its receptor in order to maintain parasitic infection. Binds to both host IL33 and host nuclear DNA and this dual binding blocks the interaction of IL33 with its receptor, and tethers IL33 within necrotic cells, preventing its release, and blocking allergic response initiation. In Heligmosomoides polygyrus (Parasitic roundworm), this protein is Alarmin release inhibitor.